The sequence spans 292 residues: NAD(P)H-hydrate epimerase (292 aa).

The N-terminal 52 residues, methionine 1 to threonine 52, are a transit peptide targeting the mitochondrion. Residues alanine 68–leucine 279 enclose the YjeF N-terminal domain. Asparagine 122–aspartate 126 contacts (6S)-NADPHX. Residues asparagine 123 and aspartate 189 each coordinate K(+). (6S)-NADPHX is bound by residues glycine 193 to alanine 199 and aspartate 222. Serine 225 is a K(+) binding site.

It belongs to the NnrE/AIBP family. It depends on K(+) as a cofactor.

It is found in the mitochondrion. The protein localises to the secreted. It catalyses the reaction (6R)-NADHX = (6S)-NADHX. The catalysed reaction is (6R)-NADPHX = (6S)-NADPHX. In terms of biological role, catalyzes the epimerization of the S- and R-forms of NAD(P)HX, a damaged form of NAD(P)H that is a result of enzymatic or heat-dependent hydration. This is a prerequisite for the S-specific NAD(P)H-hydrate dehydratase to allow the repair of both epimers of NAD(P)HX. The protein is NAD(P)H-hydrate epimerase of Xenopus tropicalis (Western clawed frog).